Consider the following 85-residue polypeptide: Acylphosphatase (85 aa).

The Acylphosphatase-like domain occupies 3 to 85 (AARFVVSGVV…PARFRRLKTL (83 aa)). Residues arginine 18 and asparagine 36 contribute to the active site. The segment at 66-85 (PPRSRRSRARPARFRRLKTL) is disordered.

Belongs to the acylphosphatase family.

The catalysed reaction is an acyl phosphate + H2O = a carboxylate + phosphate + H(+). The sequence is that of Acylphosphatase (acyP) from Xanthomonas axonopodis pv. citri (strain 306).